A 266-amino-acid chain; its full sequence is MRLIPLSTAEQVGKWAARHIVNRINAFKPTTDRPFVLGLPTGGTPLTAYKALVEMHKAGEVSFKHVVTFNMDEYVGLPKEHPESYHSFMHRNFFDHVDIPAENINLLNGNAPDIDAECRQYEEKIRSYGKIHLFMGGVGNDGHIAFNEPASSLASRTRIKTLTHDTRVANSRFFDGDVNQVPKYALTVGVGTLLDAEEVMILVLGHQKAQALQAAVEGNVNHMWTISCLQLHPKAVVVCDEPSTMELKVKTLKYFNELEAENIKGL.

The active-site Proton acceptor; for enolization step is the aspartate 72. Aspartate 141 (for ring-opening step) is an active-site residue. Histidine 143 serves as the catalytic Proton acceptor; for ring-opening step. Glutamate 148 functions as the For ring-opening step in the catalytic mechanism.

It belongs to the glucosamine/galactosamine-6-phosphate isomerase family. NagB subfamily. Homohexamer.

The catalysed reaction is alpha-D-glucosamine 6-phosphate + H2O = beta-D-fructose 6-phosphate + NH4(+). It participates in amino-sugar metabolism; N-acetylneuraminate degradation; D-fructose 6-phosphate from N-acetylneuraminate: step 5/5. Its activity is regulated as follows. Allosterically activated by N-acetylglucosamine 6-phosphate (GlcNAc6P). In terms of biological role, catalyzes the reversible isomerization-deamination of glucosamine 6-phosphate (GlcN6P) to form fructose 6-phosphate (Fru6P) and ammonium ion. The polypeptide is Glucosamine-6-phosphate deaminase (Salmonella typhi).